A 216-amino-acid chain; its full sequence is Octanoyltransferase (216 aa).

A BPL/LPL catalytic domain is found at 24–212 (KFRKECILFL…NLCSFLEPIN (189 aa)). Substrate contacts are provided by residues 69–76 (RGGDFTAH), 140–142 (SIG), and 153–155 (GIA). Cys171 functions as the Acyl-thioester intermediate in the catalytic mechanism.

Belongs to the LipB family.

The protein resides in the cytoplasm. It catalyses the reaction octanoyl-[ACP] + L-lysyl-[protein] = N(6)-octanoyl-L-lysyl-[protein] + holo-[ACP] + H(+). It participates in protein modification; protein lipoylation via endogenous pathway; protein N(6)-(lipoyl)lysine from octanoyl-[acyl-carrier-protein]: step 1/2. In terms of biological role, catalyzes the transfer of endogenously produced octanoic acid from octanoyl-acyl-carrier-protein onto the lipoyl domains of lipoate-dependent enzymes. Lipoyl-ACP can also act as a substrate although octanoyl-ACP is likely to be the physiological substrate. The protein is Octanoyltransferase of Leptospira interrogans serogroup Icterohaemorrhagiae serovar Lai (strain 56601).